The chain runs to 396 residues: Actin-related protein 6 (396 aa).

T2 carries the post-translational modification N-acetylthreonine. K260 carries the post-translational modification N6-acetyllysine.

The protein belongs to the actin family. ARP6 subfamily. Component of the chromatin-remodeling SRCAP complex composed of at least SRCAP, DMAP1, RUVBL1, RUVBL2, ACTL6A, YEATS4, ACTR6 and ZNHIT1. Interacts with CBX1, CBX3 and CBX5.

It is found in the cytoplasm. The protein localises to the cytoskeleton. It localises to the nucleus. The protein resides in the nucleolus. Its function is as follows. Required for formation and/or maintenance of proper nucleolar structure and function. Plays a dual role in the regulation of ribosomal DNA (rDNA) transcription. In the presence of high glucose, maintains active rDNA transcription through H2A.Z deposition and under glucose starvation, is required for the repression of rDNA transcription, and this function may be independent of H2A.Z. In Mus musculus (Mouse), this protein is Actin-related protein 6 (Actr6).